A 420-amino-acid polypeptide reads, in one-letter code: Gamma-glutamyl phosphate reductase 2 (420 aa).

The protein belongs to the gamma-glutamyl phosphate reductase family.

It is found in the cytoplasm. It carries out the reaction L-glutamate 5-semialdehyde + phosphate + NADP(+) = L-glutamyl 5-phosphate + NADPH + H(+). Its pathway is amino-acid biosynthesis; L-proline biosynthesis; L-glutamate 5-semialdehyde from L-glutamate: step 2/2. In terms of biological role, catalyzes the NADPH-dependent reduction of L-glutamate 5-phosphate into L-glutamate 5-semialdehyde and phosphate. The product spontaneously undergoes cyclization to form 1-pyrroline-5-carboxylate. The chain is Gamma-glutamyl phosphate reductase 2 from Synechocystis sp. (strain ATCC 27184 / PCC 6803 / Kazusa).